The sequence spans 78 residues: uncharacterized protein (78 aa).

The signal sequence occupies residues 1–45 (MPVIAIIAIVIIVIILNKTGVSDSLTALTLATVAALLTGGGAAGA).

It to E.coli YkfL.

This is an uncharacterized protein from Escherichia coli (strain K12).